The primary structure comprises 444 residues: Acyl-CoA 6-desaturase (444 aa).

Over 1 to 130 (MGGGGQQTDR…EAEGCFKTQP (130 aa)) the chain is Cytoplasmic. The Cytochrome b5 heme-binding domain maps to 18–95 (FSSYTWEEVQ…LKPLLIGELE (78 aa)). A helical transmembrane segment spans residues 131 to 151 (LFFALHLGHILLLEAIAFMMV). Residues 152 to 157 (WYFGTG) lie on the Lumenal side of the membrane. Residues 158–178 (WINTLIVAVILATAQSQAGWL) form a helical membrane-spanning segment. The Cytoplasmic portion of the chain corresponds to 179–264 (QHDFGHLSVF…KHLPYNHQHK (86 aa)). The Histidine box-1 signature appears at 180–184 (HDFGH). The Histidine box-2 signature appears at 217–221 (HFQHH). The helical transmembrane segment at 265–285 (YFFFIGPPLLIPVYFQFQIFH) threads the bilayer. Residues 286–305 (NMISHGMWVDLLWCISYYVR) lie on the Lumenal side of the membrane. Residues 306-326 (YFLCYTQFYGVFWAIILFNFV) traverse the membrane as a helical segment. Residues 327–444 (RFMESHWFVW…ELWLDAYLNK (118 aa)) lie on the Cytoplasmic side of the membrane. The Histidine box-3 signature appears at 382–386 (QIEHH).

Belongs to the fatty acid desaturase type 1 family.

It is found in the endoplasmic reticulum membrane. It carries out the reaction (9Z,12Z)-octadecadienoyl-CoA + 2 Fe(II)-[cytochrome b5] + O2 + 2 H(+) = (6Z,9Z,12Z)-octadecatrienoyl-CoA + 2 Fe(III)-[cytochrome b5] + 2 H2O. The enzyme catalyses (9Z,12Z,15Z)-octadecatrienoyl-CoA + 2 Fe(II)-[cytochrome b5] + O2 + 2 H(+) = (6Z,9Z,12Z,15Z)-octadecatetraenoyl-CoA + 2 Fe(III)-[cytochrome b5] + 2 H2O. It catalyses the reaction (8Z,11Z,14Z,17Z)-eicosatetraenoyl-CoA + 2 Fe(II)-[cytochrome b5] + O2 + 2 H(+) = (5Z,8Z,11Z,14Z,17Z)-eicosapentaenoyl-CoA + 2 Fe(III)-[cytochrome b5] + 2 H2O. The catalysed reaction is (8Z,11Z,14Z)-eicosatrienoyl-CoA + 2 Fe(II)-[cytochrome b5] + O2 + 2 H(+) = (5Z,8Z,11Z,14Z)-eicosatetraenoyl-CoA + 2 Fe(III)-[cytochrome b5] + 2 H2O. The protein operates within lipid metabolism; polyunsaturated fatty acid biosynthesis. Fatty acid desaturase with bifunctional delta-5 and delta-6 activities. Component of a lipid metabolic pathway that catalyzes the biosynthesis of polyunsaturated fatty acids (PUFA) with preference toward n-3 substrates and Delta-6 function. This chain is Acyl-CoA 6-desaturase (fads2), found in Danio rerio (Zebrafish).